The primary structure comprises 73 residues: Translation initiation factor IF-1 (73 aa).

Positions 1–73 (MPKKEGVIEI…TRGRIVYRYK (73 aa)) constitute an S1-like domain.

It belongs to the IF-1 family. As to quaternary structure, component of the 30S ribosomal translation pre-initiation complex which assembles on the 30S ribosome in the order IF-2 and IF-3, IF-1 and N-formylmethionyl-tRNA(fMet); mRNA recruitment can occur at any time during PIC assembly.

It localises to the cytoplasm. Functionally, one of the essential components for the initiation of protein synthesis. Stabilizes the binding of IF-2 and IF-3 on the 30S subunit to which N-formylmethionyl-tRNA(fMet) subsequently binds. Helps modulate mRNA selection, yielding the 30S pre-initiation complex (PIC). Upon addition of the 50S ribosomal subunit IF-1, IF-2 and IF-3 are released leaving the mature 70S translation initiation complex. The protein is Translation initiation factor IF-1 of Nocardioides sp. (strain ATCC BAA-499 / JS614).